The chain runs to 179 residues: Apoptosis regulator DPV022 (179 aa).

Residues 148-170 form a helical membrane-spanning segment; it reads VLITNYLKITIFGAILGITAYYI.

Interacts with host BAX and BAK1.

The protein localises to the host mitochondrion. It is found in the host membrane. Its function is as follows. Plays a role in the inhibition of host apoptosis by sequestering and inactivating several proapoptotic BCL-2 proteins, including BAK1 and BAX. Prevents the conformational activation of both of them. The chain is Apoptosis regulator DPV022 (DPV022) from Deerpox virus (strain Mule deer/United States/W-848-83/1983) (DPV).